A 257-amino-acid chain; its full sequence is Cobalt transport protein CbiM (257 aa).

A signal peptide spans 1-33; it reads MVKPTQAKRYASLGAIALLTTSLVVASPNPALA. 6 helical membrane passes run 39-59, 74-94, 117-137, 138-158, 171-191, and 214-234; these read GFLP…FLAW, SVLL…LKIP, LMAV…AHGG, LTTL…LAWL, AIAL…LTSL, and LFAV…VLVW.

It belongs to the CbiM family. In terms of assembly, forms an energy-coupling factor (ECF) transporter complex composed of an ATP-binding protein (A component, CbiO), a transmembrane protein (T component, CbiQ) and 2 possible substrate-capture proteins (S components, CbiM and CbiN) of unknown stoichimetry.

The protein resides in the cell inner membrane. It functions in the pathway cofactor biosynthesis; adenosylcobalamin biosynthesis. Part of the energy-coupling factor (ECF) transporter complex CbiMNOQ involved in cobalt import. The sequence is that of Cobalt transport protein CbiM from Thermosynechococcus vestitus (strain NIES-2133 / IAM M-273 / BP-1).